A 341-amino-acid chain; its full sequence is DNA-directed RNA polymerase subunit alpha (341 aa).

Residues 1-226 (MLIAQRPTIT…ELFGLVRELN (226 aa)) form an alpha N-terminal domain (alpha-NTD) region. The interval 241 to 341 (AALAADLALP…DQRYIETEQL (101 aa)) is alpha C-terminal domain (alpha-CTD).

It belongs to the RNA polymerase alpha chain family. As to quaternary structure, homodimer. The RNAP catalytic core consists of 2 alpha, 1 beta, 1 beta' and 1 omega subunit. When a sigma factor is associated with the core the holoenzyme is formed, which can initiate transcription.

It catalyses the reaction RNA(n) + a ribonucleoside 5'-triphosphate = RNA(n+1) + diphosphate. In terms of biological role, DNA-dependent RNA polymerase catalyzes the transcription of DNA into RNA using the four ribonucleoside triphosphates as substrates. In Acidothermus cellulolyticus (strain ATCC 43068 / DSM 8971 / 11B), this protein is DNA-directed RNA polymerase subunit alpha.